A 61-amino-acid chain; its full sequence is MFSMKKSLLLLFFLGTISLSLCEQERDAEEEEGSENGAEDIKINRVVKCSYRPGSPDSRCK.

An N-terminal signal peptide occupies residues Met-1–Cys-22. Residues Glu-23–Arg-45 constitute a propeptide that is removed on maturation.

Belongs to the frog skin active peptide (FSAP) family. Brevinin subfamily. As to expression, expressed by the skin glands.

The protein resides in the secreted. This Odorrana hainanensis (Odor frog) protein is Odorranain-A6.